The sequence spans 443 residues: Tol-Pal system protein TolB (443 aa).

A signal peptide spans 1 to 33 (MKIGIINTKIRTVFSAFACMIAASLVCTMPARA).

Belongs to the TolB family. The Tol-Pal system is composed of five core proteins: the inner membrane proteins TolA, TolQ and TolR, the periplasmic protein TolB and the outer membrane protein Pal. They form a network linking the inner and outer membranes and the peptidoglycan layer.

It is found in the periplasm. Part of the Tol-Pal system, which plays a role in outer membrane invagination during cell division and is important for maintaining outer membrane integrity. This is Tol-Pal system protein TolB from Brucella suis biovar 1 (strain 1330).